The primary structure comprises 170 residues: Fibroblast growth factor 2 (170 aa).

The tract at residues 1 to 21 (VGGRGRGRGTAAAARREPGGA) is disordered. An omega-N-methylarginine; alternate mark is found at Arg4, Arg6, and Arg8. 3 positions are modified to symmetric dimethylarginine; alternate: Arg4, Arg6, and Arg8. A compositionally biased stretch (low complexity) spans 9-21 (GTAAAARREPGGA). Asn51 is a heparin binding site. Tyr97 bears the Phosphotyrosine; by TEC mark. Lys110 participates in a covalent cross-link: Glycyl lysine isopeptide (Lys-Gly) (interchain with G-Cter in SUMO1). The tract at residues 143-159 (KRTGQYKLGSKTGPGQK) is heparin-binding.

The protein belongs to the heparin-binding growth factors family. In terms of assembly, monomer. Homodimer. Interacts with FGFR1, FGFR2, FGFR3 and FGFR4. Affinity between fibroblast growth factors (FGFs) and their receptors is increased by heparan sulfate glycosaminoglycans that function as coreceptors. Interacts with CSPG4, FGFBP1 and TEC. Found in a complex with FGFBP1, FGF1 and FGF2. Interacts with FGFBP3. Interacts with integrin ITGAV:ITGB3; the interaction is required for FGF2 signaling. Interacts with SNORC (via the extracellular domain). Interacts with glypican GPC3. Post-translationally, the N-terminus of isoform 2 is blocked. Phosphorylation at Tyr-97 regulates FGF2 unconventional secretion.

It is found in the secreted. The protein resides in the nucleus. Its function is as follows. Acts as a ligand for FGFR1, FGFR2, FGFR3 and FGFR4. Also acts as an integrin ligand which is required for FGF2 signaling. Binds to integrin ITGAV:ITGB3. Plays an important role in the regulation of cell survival, cell division, cell differentiation and cell migration. Functions as a potent mitogen in vitro. Can induce angiogenesis. Mediates phosphorylation of ERK1/2 and thereby promotes retinal lens fiber differentiation. This is Fibroblast growth factor 2 (FGF2) from Cavia porcellus (Guinea pig).